The chain runs to 247 residues: UPF0280 protein MmarC5_0355 (247 aa).

It belongs to the UPF0280 family.

This is UPF0280 protein MmarC5_0355 from Methanococcus maripaludis (strain C5 / ATCC BAA-1333).